The following is a 275-amino-acid chain: Epidermal growth factor-like protein 7 (275 aa).

The first 21 residues, 1–21 (MWGSGELLVAWFLVLAADGTT), serve as a signal peptide directing secretion. The EMI domain occupies 28 to 105 (SRRVCTVGIS…TSGLPGACGA (78 aa)). 8 disulfides stabilise this stretch: Cys32–Cys90, Cys57–Cys63, Cys89–Cys103, Cys108–Cys118, Cys112–Cys124, Cys126–Cys135, Cys142–Cys153, and Cys149–Cys162. Residues 104–136 (GAAICQPPCGNGGSCIRPGHCRCPVGWQGDTCQ) form the EGF-like 1 domain. The short motif at 131-133 (QGD) is the Cell attachment site element. Residues 138 to 178 (DVDECSTGEASCPQRCVNTVGSYWCQGWEGQSPSADGTRCL) form the EGF-like 2; calcium-binding domain. Residues 173–193 (DGTRCLSKEGPSPVAPNPTAG) form a disordered region. Positions 196–220 (SMAREEVYRLQARVDVLEQKLQLVL) form a coiled coil.

Interacts with ITGAV/ITGB3 in an RGD-dependent manner, increasing endothelial cell's motility. Expressed specifically by endothelial cells of the highly vascularized organs heart, lung and kidney.

It localises to the secreted. The protein resides in the extracellular space. Functionally, regulates vascular tubulogenesis in vivo. Inhibits platelet-derived growth factor (PDGF)-BB-induced smooth muscle cell migration and promotes endothelial cell adhesion to the extracellular matrix and angiogenesis. In Mus musculus (Mouse), this protein is Epidermal growth factor-like protein 7 (Egfl7).